A 436-amino-acid polypeptide reads, in one-letter code: Adenosylmethionine-8-amino-7-oxononanoate aminotransferase (436 aa).

A substrate-binding site is contributed by tryptophan 66. 126-127 provides a ligand contact to pyridoxal 5'-phosphate; that stretch reads GS. Residue tyrosine 159 participates in substrate binding. Aspartate 256 is a binding site for pyridoxal 5'-phosphate. Substrate-binding residues include lysine 285 and glycine 318. Position 285 is an N6-(pyridoxal phosphate)lysine (lysine 285). 319–320 serves as a coordination point for pyridoxal 5'-phosphate; that stretch reads PT. Substrate is bound at residue arginine 402.

This sequence belongs to the class-III pyridoxal-phosphate-dependent aminotransferase family. BioA subfamily. In terms of assembly, homodimer. The cofactor is pyridoxal 5'-phosphate.

It is found in the cytoplasm. The catalysed reaction is (8S)-8-amino-7-oxononanoate + S-adenosyl-L-methionine = S-adenosyl-4-methylsulfanyl-2-oxobutanoate + (7R,8S)-7,8-diammoniononanoate. The protein operates within cofactor biosynthesis; biotin biosynthesis; 7,8-diaminononanoate from 8-amino-7-oxononanoate (SAM route): step 1/1. In terms of biological role, catalyzes the transfer of the alpha-amino group from S-adenosyl-L-methionine (SAM) to 7-keto-8-aminopelargonic acid (KAPA) to form 7,8-diaminopelargonic acid (DAPA). It is the only aminotransferase known to utilize SAM as an amino donor. The sequence is that of Adenosylmethionine-8-amino-7-oxononanoate aminotransferase from Mycobacterium leprae (strain TN).